We begin with the raw amino-acid sequence, 829 residues long: Transcription activator GutR (829 aa).

The segment at residues 42–61 (IDKIALQLGVSPNTIKSWIG) is a DNA-binding region (H-T-H motif). 200–207 (GWAGMGKT) provides a ligand contact to ATP. TPR repeat units lie at residues 697 to 730 (HRVLLVRGDLSFARGYHVEAIQLYEAANEISSTY), 736 to 769 (IEAYFNLGVAYVKCDQFEKAEEAFEQMLYDKHNA), and 775 to 808 (IYYHYGMAQLLYRKGEKTKAVESNQKAIRLIDSW).

In terms of biological role, activator of the glucitol dehydrogenase gene (gutB). This is Transcription activator GutR (gutR) from Bacillus subtilis (strain 168).